We begin with the raw amino-acid sequence, 614 residues long: Vitamin B12 transporter BtuB (614 aa).

An N-terminal signal peptide occupies residues 1 to 20 (MIKKATLLTAFSVTAFSAWA). Positions 26 to 33 (DTLVVTAN) match the TonB box motif. The TBDR plug domain occupies 38-152 (PRSAVLAPVT…IGGVVNIITT (115 aa)). Cyanocob(III)alamin contacts are provided by residues Ser-85, Asn-92, and 110 to 111 (VS). One can recognise a TBDR beta-barrel domain in the interval 155-614 (NPGTELTAGW…EYTLSGSYTF (460 aa)). Transmembrane regions (beta stranded) follow at residues 158 to 165 (TELTAGWG), 169 to 178 (YQNYDISTQQ), and 184 to 195 (TRATLIGDYEYT). Positions 199, 211, 213, and 215 each coordinate Ca(2+). The next 2 beta stranded transmembrane spans lie at 217–227 (FLSKTLYGALE) and 232–248 (DRWSGFVRGYGYDNRTD). 2 residues coordinate Ca(2+): Tyr-249 and Asp-250. Ala-251 is a binding site for cyanocob(III)alamin. Residue Asp-261 participates in Ca(2+) binding. 14 beta stranded membrane-spanning segments follow: residues 263–277 (RKLYSQSWDAGLRFN), 279–296 (ERIQSQLVSSYSHSKDYN), 309–325 (TLDEMKQYNVQWTNSVV), 328–337 (HGNVGAGVDW), 353–369 (YDQRNTGVYLTGLQQLG), 371–381 (FTLEAAARSDD), 385–400 (FGRHGTWQTSAGWEFI), 403–417 (YRFIASYGTSYKAPN), 434–443 (KSKQWEGAFE), 449–458 (VSWRISGYRN), 473–490 (YYNEGKARIKGIEATANF), 494–509 (PLTHTVSYDYVDARNA), 517–529 (RRSKQMAKYQLDW), and 535–550 (DWGVTYQYLGSRYDSD). Thr-309 is a cyanocob(III)alamin binding site. Arg-517 contacts cyanocob(III)alamin. Tyr-551 provides a ligand contact to cyanocob(III)alamin. Transmembrane regions (beta stranded) follow at residues 558–572 (TVKMGGVSLWDLTVA), 585–596 (IANLFDKDYETV), and 602–614 (AGREYTLSGSYTF). The TonB C-terminal box signature appears at 597–614 (YGYQTAGREYTLSGSYTF).

The protein belongs to the TonB-dependent receptor family. BtuB (TC 1.B.14.3.1) subfamily.

The protein resides in the cell outer membrane. Involved in the active translocation of vitamin B12 (cyanocobalamin) across the outer membrane to the periplasmic space. It derives its energy for transport by interacting with the trans-periplasmic membrane protein TonB. This Salmonella choleraesuis (strain SC-B67) protein is Vitamin B12 transporter BtuB.